An 83-amino-acid polypeptide reads, in one-letter code: Turripeptide Lol11.2 (83 aa).

Residues 1-27 (MARLMMTVGCLIFIVVLLDMMVPVSNT) form the signal peptide.

The protein belongs to the conopeptide I2-like superfamily. Post-translationally, contains 4 disulfide bonds. In terms of tissue distribution, expressed by the venom duct.

The protein localises to the secreted. Acts as a neurotoxin by inhibiting voltage-gated potassium channels (Kv). The sequence is that of Turripeptide Lol11.2 from Iotyrris olangoensis (Sea snail).